An 806-amino-acid polypeptide reads, in one-letter code: MATLQDIGVSALINLFGAFLFLIAFAVLRIQPINDRVYFPKWYLTGERNSPRRSDRTLVGKFVNLNYKTYFTFLNWMPQAMKMSESEIIRHAGLDSAIFLRIYTLGLKIFAPVMVLALVVLVPVNVSSGTLFFLKKELVVSNIDKLSISNVQPKSSKFFFHIAVEYIFTFWACFMLYREYNNVAIMRLQYLASQRRRPEQFTVVVRNVPDMPGHSVPDTVDQFFKTNHPEHYLCHQAVYNANTYAKLVKQRAKLQRWFDYYVLKHQRNPHKQPTCRTGFLGLWGKRVDSIEYYKQQIKEFDHNMSLERQKVLKDSKLMLPVAFVSFDSRWGAAVCAQTQQSKNPTLWLTSSAPEPRDIYWQNLAIPFISLTIRKLVIGVSVFALVFFYMIPIAFVQSLANLEGLDRVAPFLRPVTRLDFIKSFLQGFLPGLALKIFLWILPTVLLIMSKIEGYIALSTLERRAAAKYYYFMLVNVFLGSIIAGTAFEQLHSFLHQSPSQIPRTIGVSIPMKATFFITYIMVDGWAGIAGEILRLKPLVIFHLKNMFIVKTEEDRVRAMDPGFVDFKETIPSLQLYFLLGIVYTAVTPILLPFILIFFAFAYLVYRHQIINVYNQQYESCGAFWPHVHGRIIASLLISQLLLMGLLASKKAADSTPLLIILPILTLSFHKYCKHRFEPAFRQYPLEEAMAKDKLEKETEPELNMKADLADAYLHPIFHSFEKEVELSSSSSSEKETHQEETPEVRVDKHETQSSSPVTELGTSSHHHHVYNSTSPSSHYASAYEQSSSQYEYHYNTHQYEEHEYRYN.

A run of 10 helical transmembrane segments spans residues 7 to 27 (IGVS…AFAV), 102 to 122 (IYTL…VVLV), 157 to 177 (KFFF…FMLY), 375 to 395 (LVIG…IAFV), 427 to 447 (FLPG…LLIM), 467 to 487 (YYYF…TAFE), 512 to 532 (ATFF…GEIL), 576 to 596 (FLLG…ILIF), 626 to 646 (VHGR…GLLA), and 650 to 670 (AADS…FHKY). Positions 726–786 (SSSSSSEKET…HYASAYEQSS (61 aa)) are disordered. The span at 731 to 750 (SEKETHQEETPEVRVDKHET) shows a compositional bias: basic and acidic residues. Threonine 735 carries the phosphothreonine modification. Residues 751–762 (QSSSPVTELGTS) are compositionally biased toward polar residues. A compositionally biased stretch (low complexity) spans 775 to 786 (SSHYASAYEQSS).

Belongs to the CSC1 (TC 1.A.17) family.

It localises to the golgi apparatus membrane. Its subcellular location is the cell membrane. Acts as an osmosensitive calcium-permeable cation channel. This chain is Hyperosmolality-gated Ca2+ permeable channel 1.8, found in Arabidopsis thaliana (Mouse-ear cress).